The sequence spans 524 residues: Pentatricopeptide repeat-containing protein At1g02150 (524 aa).

PPR repeat units lie at residues 168–202, 203–237, 238–268, 274–304, 309–339, 344–378, and 379–413; these read DRRV…GYAL, HPLP…DIRL, DIYS…MKSD, NWTT…VEAR, NRIP…YKSV, PNLG…KSSY, and DPRI…GGKP.

This sequence belongs to the PPR family. P subfamily.

This chain is Pentatricopeptide repeat-containing protein At1g02150, found in Arabidopsis thaliana (Mouse-ear cress).